Here is a 421-residue protein sequence, read N- to C-terminus: 4-hydroxy-3-methylbut-2-en-1-yl diphosphate synthase (flavodoxin) (421 aa).

Residues cysteine 298, cysteine 301, cysteine 344, and glutamate 351 each coordinate [4Fe-4S] cluster.

Belongs to the IspG family. Requires [4Fe-4S] cluster as cofactor.

It catalyses the reaction (2E)-4-hydroxy-3-methylbut-2-enyl diphosphate + oxidized [flavodoxin] + H2O + 2 H(+) = 2-C-methyl-D-erythritol 2,4-cyclic diphosphate + reduced [flavodoxin]. The protein operates within isoprenoid biosynthesis; isopentenyl diphosphate biosynthesis via DXP pathway; isopentenyl diphosphate from 1-deoxy-D-xylulose 5-phosphate: step 5/6. Functionally, converts 2C-methyl-D-erythritol 2,4-cyclodiphosphate (ME-2,4cPP) into 1-hydroxy-2-methyl-2-(E)-butenyl 4-diphosphate. This Neisseria meningitidis serogroup B (strain ATCC BAA-335 / MC58) protein is 4-hydroxy-3-methylbut-2-en-1-yl diphosphate synthase (flavodoxin).